A 128-amino-acid chain; its full sequence is 2-iminobutanoate/2-iminopropanoate deaminase (128 aa).

This sequence belongs to the RutC family.

Its subcellular location is the cytoplasm. The enzyme catalyses 2-iminobutanoate + H2O = 2-oxobutanoate + NH4(+). It carries out the reaction 2-iminopropanoate + H2O = pyruvate + NH4(+). In terms of biological role, catalyzes the hydrolytic deamination of enamine/imine intermediates that form during the course of normal metabolism. May facilitate the release of ammonia from these potentially toxic reactive metabolites, reducing their impact on cellular components. It may act on enamine/imine intermediates formed by several types of pyridoxal-5'-phosphate-dependent dehydratases including L-threonine dehydratase. Preferentially digests Leu and Met in cooperation with L-amino acid oxidase, but digests Phe poorly. This is 2-iminobutanoate/2-iminopropanoate deaminase from Dermatophagoides farinae (American house dust mite).